Here is a 203-residue protein sequence, read N- to C-terminus: Peptide deformylase (203 aa).

C121 and H163 together coordinate Fe cation. E164 is an active-site residue. H167 is a Fe cation binding site.

It belongs to the polypeptide deformylase family. It depends on Fe(2+) as a cofactor.

It carries out the reaction N-terminal N-formyl-L-methionyl-[peptide] + H2O = N-terminal L-methionyl-[peptide] + formate. Removes the formyl group from the N-terminal Met of newly synthesized proteins. Requires at least a dipeptide for an efficient rate of reaction. N-terminal L-methionine is a prerequisite for activity but the enzyme has broad specificity at other positions. This is Peptide deformylase from Prochlorococcus marinus (strain SARG / CCMP1375 / SS120).